A 154-amino-acid chain; its full sequence is Myoglobin (154 aa).

Residues 2 to 148 (GLSEAEWQLV…FRKDIAAKYK (147 aa)) enclose the Globin domain. Ser4 carries the phosphoserine modification. Nitrite is bound at residue His65. His65 serves as a coordination point for O2. A Phosphothreonine modification is found at Thr68. Residue His94 participates in heme b binding.

Belongs to the globin family. In terms of assembly, monomeric.

Its subcellular location is the cytoplasm. It is found in the sarcoplasm. The enzyme catalyses Fe(III)-heme b-[protein] + nitric oxide + H2O = Fe(II)-heme b-[protein] + nitrite + 2 H(+). It carries out the reaction H2O2 + AH2 = A + 2 H2O. Its function is as follows. Monomeric heme protein which primary function is to store oxygen and facilitate its diffusion within muscle tissues. Reversibly binds oxygen through a pentacoordinated heme iron and enables its timely and efficient release as needed during periods of heightened demand. Depending on the oxidative conditions of tissues and cells, and in addition to its ability to bind oxygen, it also has a nitrite reductase activity whereby it regulates the production of bioactive nitric oxide. Under stress conditions, like hypoxia and anoxia, it also protects cells against reactive oxygen species thanks to its pseudoperoxidase activity. This is Myoglobin (MB) from Indopacetus pacificus (Longman's beaked whale).